The following is a 911-amino-acid chain: FIGNL1-interacting regulator of recombination and mitosis (911 aa).

Residues 830–853 (SEKSQPAQTPLTEEPCAKRARQET) form a disordered region. Over residues 844-853 (PCAKRARQET) the composition is skewed to basic and acidic residues.

It localises to the chromosome. The protein localises to the centromere. Its subcellular location is the kinetochore. The protein resides in the nucleus. It is found in the midbody. It localises to the cytoplasm. The protein localises to the cytoskeleton. Its subcellular location is the spindle. Functionally, may play a role in chromosome segregation. The chain is FIGNL1-interacting regulator of recombination and mitosis from Danio rerio (Zebrafish).